The sequence spans 248 residues: 23S rRNA (guanosine(2553)-2'-O)-methyltransferase RlmP (248 aa).

Residues Arg123, Gly204, Val224, and Leu233 each contribute to the S-adenosyl-L-methionine site.

This sequence belongs to the class IV-like SAM-binding methyltransferase superfamily. RNA methyltransferase TrmH family. Homodimer.

Its subcellular location is the cytoplasm. It catalyses the reaction guanosine(2553) in 23S rRNA + S-adenosyl-L-methionine = 2'-O-methylguanosine(2553) in 23S rRNA + S-adenosyl-L-homocysteine + H(+). Its function is as follows. Specifically methylates the ribose of guanosine 2553 (G2553) in 23S rRNA. When the target G2553 is mutated, is able to methylate the ribose of adenosine, but it cannot methylate cytidine nor uridine. Modifies free 23S rRNA but not the fully assembled ribosome nor the 50S subunit, suggesting that the modification occurs early during ribosome biogenesis. This Bacillus subtilis (strain 168) protein is 23S rRNA (guanosine(2553)-2'-O)-methyltransferase RlmP.